Consider the following 353-residue polypeptide: Protein MGF 360-13L (353 aa).

The protein belongs to the asfivirus MGF 360 family.

In terms of biological role, plays a role in virus cell tropism, and may be required for efficient virus replication in macrophages. The protein is Protein MGF 360-13L of African swine fever virus (isolate Pig/Kenya/KEN-50/1950) (ASFV).